Consider the following 314-residue polypeptide: Homoserine O-acetyltransferase (314 aa).

C142 acts as the Acyl-thioester intermediate in catalysis. Substrate-binding residues include K163 and S192. The Proton acceptor role is filled by H235. Residue E237 is part of the active site. A substrate-binding site is contributed by R249.

This sequence belongs to the MetA family.

Its subcellular location is the cytoplasm. It carries out the reaction L-homoserine + acetyl-CoA = O-acetyl-L-homoserine + CoA. It functions in the pathway amino-acid biosynthesis; L-methionine biosynthesis via de novo pathway; O-acetyl-L-homoserine from L-homoserine: step 1/1. Its function is as follows. Transfers an acetyl group from acetyl-CoA to L-homoserine, forming acetyl-L-homoserine. This is Homoserine O-acetyltransferase from Streptococcus pneumoniae (strain Taiwan19F-14).